We begin with the raw amino-acid sequence, 463 residues long: Interstitial collagenase B (463 aa).

The N-terminal stretch at 1–17 (MPSLPLLLRLWAASSYS) is a signal peptide. The propeptide at 18–96 (FPVIQDGLQK…PRCGVPDVAP (79 aa)) is activation peptide. The Cysteine switch motif lies at 87–94 (PRCGVPDV). Cys89 lines the Zn(2+) pocket. Residues 95 to 273 (APYAITHNNP…PIQLTDATLD (179 aa)) are metalloprotease. Asp155 is a binding site for Ca(2+). 2 residues coordinate Zn(2+): His165 and Asp167. The Ca(2+) site is built by Asp172 and Gly173. Residue His180 coordinates Zn(2+). 2 residues coordinate Ca(2+): Gly187 and Gly189. His193 contacts Zn(2+). Ca(2+) is bound at residue Asp195. His215 is a binding site for Zn(2+). Glu216 is a catalytic residue. Zn(2+) is bound by residues His219 and His225. Cys275 and Cys463 are joined by a disulfide. Hemopexin repeat units follow at residues 278–321 (GLTF…WPNL) and 322–368 (PGKF…FGFP). Residue Asp282 participates in Ca(2+) binding. Residue Asn370 is glycosylated (N-linked (GlcNAc...) asparagine). Hemopexin repeat units follow at residues 371–419 (VTNI…FPGI) and 420–463 (DYKV…WFNC). Residues Asp375 and Asp424 each coordinate Ca(2+).

It belongs to the peptidase M10A family. Ca(2+) is required as a cofactor. Requires Zn(2+) as cofactor.

The protein resides in the secreted. It localises to the extracellular space. Its subcellular location is the extracellular matrix. It catalyses the reaction Cleavage of the triple helix of collagen at about three-quarters of the length of the molecule from the N-terminus, at 775-Gly-|-Ile-776 in the alpha1(I) chain. Cleaves synthetic substrates and alpha-macroglobulins at bonds where P1' is a hydrophobic residue.. With respect to regulation, can be activated without removal of the activation peptide. The polypeptide is Interstitial collagenase B (Mmp1b) (Mus musculus (Mouse)).